Here is a 283-residue protein sequence, read N- to C-terminus: Probable replication-associated protein repA1 (283 aa).

The protein belongs to the IncFII RepA family.

Functionally, this protein is essential for plasmid replication; it is involved in copy control functions. The protein is Probable replication-associated protein repA1 (repA1) of Buchnera aphidicola subsp. Acyrthosiphon pisum (strain APS) (Acyrthosiphon pisum symbiotic bacterium).